Reading from the N-terminus, the 890-residue chain is Pentatricopeptide repeat-containing protein At3g57430, chloroplastic (890 aa).

Residues 1–44 (MSCPLAFTFSLPSIFPFPSQLLPFSRHKHPYLLRATPTSATEDV) constitute a chloroplast transit peptide. PPR repeat units follow at residues 61–95 (SPEW…GIKP), 96–130 (DNYA…GYGV), 132–162 (SVTV…ISER), 163–197 (NQVS…NVEP), 198–231 (SSFT…GLRK), 235–265 (NSFI…FGGR), 266–300 (DLVT…GVEP), 301–335 (DEFT…GSLD), 337–371 (NSFV…KIGL), 372–398 (WNAM…MEES), 404–438 (NSTT…GLDR), 439–473 (DRFV…DLVT), 474–504 (WNTM…ERKV), 516–550 (NSIT…NLAT), 551–581 (DVAV…IPQK), 582–616 (NVIT…GVKP), 617–652 (NEVT…GVEP), and 653–683 (SSDH…MPRD). Residues 689–764 (AWSSLLGASR…EPGCSWIEHG (76 aa)) are type E motif. Residues 765 to 795 (DEVHKFVAGDSSHPQSEKLSGYLETLWERMR) are type E(+) motif. Positions 796–890 (KEGYVPDTSC…NGTCSCGDYW (95 aa)) are type DYW motif.

The protein belongs to the PPR family. PCMP-H subfamily.

The protein resides in the plastid. Its subcellular location is the chloroplast. Its function is as follows. Involved in RNA editing events in chloroplasts. Required for the editing of a single site in ndhB and ndhF transcripts, which are two plastid-encoded subunits of the chloroplast NAD(P)H dehydrogenase (NDH) complex. Required for the editing of a single site in psbZ. Required for optimal activity of the NDH complex of the photosynthetic electron transport chain. The protein is Pentatricopeptide repeat-containing protein At3g57430, chloroplastic (PCMP-H81) of Arabidopsis thaliana (Mouse-ear cress).